The chain runs to 2252 residues: RNA1 polyprotein (2252 aa).

The Cytoplasmic segment spans residues 565–1140; the sequence is MITTLAQSIF…QGREFIVSNG (576 aa). An SF3 helicase domain is found at 733 to 899; that stretch reads MKDLLELQKR…PGVIFDPDNA (167 aa). 763–770 contacts ATP; it reads GPSHCGKS. Residues 1141-1161 form a helical membrane-spanning segment; sequence GGILMIAAAIILVLVCGWGFW. The Lumenal segment spans residues 1162 to 1187; the sequence is KAFVGLFTGSMSLGAALAGCQEAEVK. One can recognise a Peptidase C3 domain in the interval 1213-1422; sequence SYARSQAGNG…WACILPNPHL (210 aa). Catalysis depends on for picornain 3C-like protease activity residues His1256, Glu1294, and Cys1386. Residues 1697–1825 enclose the RdRp catalytic domain; that stretch reads NEAINCDYSG…SVSPAVASWF (129 aa).

It belongs to the nepoviruses RNA1 polyprotein family. Specific enzymatic cleavages by picornain 3C-like protease in vivo yield mature proteins. Picornain 3C-like protease is autocatalytically processed. Post-translationally, VPg is uridylylated by the polymerase and is covalently linked to the 5'-end of genomic RNA. This uridylylated form acts as a nucleotide-peptide primer for the polymerase.

It is found in the host endoplasmic reticulum lumen. The protein localises to the host endoplasmic reticulum membrane. The enzyme catalyses RNA(n) + a ribonucleoside 5'-triphosphate = RNA(n+1) + diphosphate. Its function is as follows. Picornain 3C-like protease is a thiol protease that cleaves the P1 and P2 polyproteins. The polypeptide is RNA1 polyprotein (Apium graveolens (Celery)).